Consider the following 168-residue polypeptide: G/U mismatch-specific DNA glycosylase (168 aa).

The protein belongs to the uracil-DNA glycosylase (UDG) superfamily. TDG/mug family. Binds DNA as a monomer.

Its subcellular location is the cytoplasm. The enzyme catalyses Specifically hydrolyzes mismatched double-stranded DNA and polynucleotides, releasing free uracil.. In terms of biological role, excises ethenocytosine and uracil, which can arise by alkylation or deamination of cytosine, respectively, from the corresponding mispairs with guanine in ds-DNA. It is capable of hydrolyzing the carbon-nitrogen bond between the sugar-phosphate backbone of the DNA and the mispaired base. The complementary strand guanine functions in substrate recognition. Required for DNA damage lesion repair in stationary-phase cells. The chain is G/U mismatch-specific DNA glycosylase from Klebsiella pneumoniae subsp. pneumoniae (strain ATCC 700721 / MGH 78578).